Reading from the N-terminus, the 1101-residue chain is Lysylphosphatidylglycerol biosynthesis bifunctional protein LysX (1101 aa).

Residues M1–D601 are phosphatidylglycerol lysyltransferase. The next 7 membrane-spanning stretches (helical) occupy residues V18 to V38, F60 to A80, I84 to L104, D113 to A133, V151 to F171, Y183 to S200, and V207 to F227. The tract at residues R602–R1101 is lysine--tRNA ligase. A DNA-binding region (OB) is located at residues V662–I740. The Mg(2+) site is built by D1013 and E1020.

In the N-terminal section; belongs to the LPG synthetase family. The protein in the C-terminal section; belongs to the class-II aminoacyl-tRNA synthetase family. Requires Mg(2+) as cofactor.

The protein resides in the cell membrane. It carries out the reaction tRNA(Lys) + L-lysine + ATP = L-lysyl-tRNA(Lys) + AMP + diphosphate. It catalyses the reaction L-lysyl-tRNA(Lys) + a 1,2-diacyl-sn-glycero-3-phospho-(1'-sn-glycerol) = a 1,2-diacyl-sn-glycero-3-phospho-1'-(3'-O-L-lysyl)-sn-glycerol + tRNA(Lys). In terms of biological role, catalyzes the production of L-lysyl-tRNA(Lys)transfer and the transfer of a lysyl group from L-lysyl-tRNA(Lys) to membrane-bound phosphatidylglycerol (PG), which produces lysylphosphatidylglycerol (LPG), one of the components of the bacterial membrane with a positive net charge. LPG synthesis contributes to the resistance to cationic antimicrobial peptides (CAMPs) and likely protects M.tuberculosis against the CAMPs produced by competiting microorganisms (bacteriocins). In fact, the modification of anionic phosphatidylglycerol with positively charged L-lysine results in repulsion of the peptides. The chain is Lysylphosphatidylglycerol biosynthesis bifunctional protein LysX (lysX) from Mycolicibacterium gilvum (strain PYR-GCK) (Mycobacterium gilvum (strain PYR-GCK)).